A 231-amino-acid chain; its full sequence is Protein N-terminal glutamine amidohydrolase (231 aa).

Residues 1–21 (MADDRVAGGATPPPPPPPPPL) form a disordered region. The segment covering 11–21 (TPPPPPPPPPL) has biased composition (pro residues). Residues cysteine 33, histidine 89, and aspartate 108 contribute to the active site.

The protein belongs to the NTAQ1 family. Monomer.

The enzyme catalyses N-terminal L-glutaminyl-[protein] + H2O = N-terminal L-glutamyl-[protein] + NH4(+). Functionally, mediates the side-chain deamidation of N-terminal glutamine residues to glutamate, an important step in N-end rule pathway of protein degradation. Conversion of the resulting N-terminal glutamine to glutamate renders the protein susceptible to arginylation, polyubiquitination and degradation as specified by the N-end rule. Does not act on substrates with internal or C-terminal glutamine and does not act on non-glutamine residues in any position. The chain is Protein N-terminal glutamine amidohydrolase from Oryza sativa subsp. indica (Rice).